The sequence spans 759 residues: Spindle pole body component alp16 (759 aa).

In terms of assembly, interacts with gamma-tubulin.

The protein resides in the cytoplasm. It localises to the cytoskeleton. Its subcellular location is the microtubule organizing center. The protein localises to the spindle pole body. Its function is as follows. Component of the gamma tubule complex that is required for the regulation of both interphase microtubules and mitotic bipolar spindles. This chain is Spindle pole body component alp16 (alp16), found in Schizosaccharomyces pombe (strain 972 / ATCC 24843) (Fission yeast).